The following is a 290-amino-acid chain: Endoplasmic reticulum-Golgi intermediate compartment protein 1 (290 aa).

Topologically, residues M1–A26 are cytoplasmic. A helical membrane pass occupies residues I27 to F47. Topologically, residues I48–T254 are lumenal. N-linked (GlcNAc...) asparagine glycosylation occurs at N74. A helical transmembrane segment spans residues T255–F275. At T276 to H290 the chain is on the cytoplasmic side.

This sequence belongs to the ERGIC family. In terms of assembly, may form a heteromeric complex composed of ERGIC1, ERGIC2 and ERGIC3. Within the complex, the interaction with ERGIC3 is direct. Interacts with ERGIC3/ERV46. N-glycosylated.

Its subcellular location is the endoplasmic reticulum membrane. It localises to the endoplasmic reticulum-Golgi intermediate compartment membrane. The protein resides in the golgi apparatus membrane. In terms of biological role, possible role in transport between endoplasmic reticulum and Golgi. This is Endoplasmic reticulum-Golgi intermediate compartment protein 1 (Ergic1) from Mus musculus (Mouse).